Reading from the N-terminus, the 172-residue chain is Epididymal secretory protein 4 (172 aa).

A signal peptide spans 1–21 (MIAVLLLVFGMTPDYIFPVSA). An intrachain disulfide couples cysteine 82 to cysteine 167.

It belongs to the calycin superfamily. Lipocalin family. In terms of tissue distribution, secreted by the epididymal epithelial cells.

The protein resides in the secreted. The protein localises to the extracellular space. Its function is as follows. Could transport small hydrophobic molecules into the epididymal fluid during the sperm maturation. Binds to the head region of spermatozoa and plays a key role in sperm maturation. The protein is Epididymal secretory protein 4 of Zootoca vivipara (Common lizard).